Consider the following 195-residue polypeptide: MRIGLLGGSFNPAHAGHLMLARRALRALRLDQVWLMVSPGNPLKPSKGMAPFRVRLASAERIADGRRIVATDIESRLGQRFTVKTVGLLKQRFPHVRFVWLMGADGLAQLSHWKRWRRLAAMVPIAVLPRPGSVSPALRGAAASVLRHQRRPSRESPVLAERKGNAWTFLSAPQNDISATALRESGQFRPDSDQE.

This sequence belongs to the NadD family.

The catalysed reaction is nicotinate beta-D-ribonucleotide + ATP + H(+) = deamido-NAD(+) + diphosphate. Its pathway is cofactor biosynthesis; NAD(+) biosynthesis; deamido-NAD(+) from nicotinate D-ribonucleotide: step 1/1. In terms of biological role, catalyzes the reversible adenylation of nicotinate mononucleotide (NaMN) to nicotinic acid adenine dinucleotide (NaAD). The sequence is that of Probable nicotinate-nucleotide adenylyltransferase from Gluconobacter oxydans (strain 621H) (Gluconobacter suboxydans).